A 620-amino-acid polypeptide reads, in one-letter code: Endoglucanase 21 (620 aa).

Residues 1 to 39 (MYGRDPWGGPLEINAADSMTDDDRSRNLQDLDRATPSRP) are disordered. The Cytoplasmic segment spans residues 1 to 70 (MYGRDPWGGP…DLGCILVSRK (70 aa)). The segment covering 21–39 (DDDRSRNLQDLDRATPSRP) has biased composition (basic and acidic residues). A helical; Signal-anchor for type II membrane protein membrane pass occupies residues 71–91 (IFLWTLGTIVVTALLSGFITL). The Extracellular segment spans residues 92-620 (IVKTLPHHHH…TPPPPAPWTP (529 aa)). 2 N-linked (GlcNAc...) asparagine glycosylation sites follow: Asn-108 and Asn-134. Asp-166 acts as the Nucleophile in catalysis. Asn-217, Asn-325, Asn-346, Asn-409, Asn-426, and Asn-482 each carry an N-linked (GlcNAc...) asparagine glycan. Residues His-514 and Asp-561 contribute to the active site. An N-linked (GlcNAc...) asparagine glycan is attached at Asn-567. Residue Glu-570 is part of the active site.

It belongs to the glycosyl hydrolase 9 (cellulase E) family. In terms of tissue distribution, expressed in conductive tissues of young roots, cotyledons, rosette leaves, cauline leaves and sepals. Expressed in the leaf trichome support cells.

The protein localises to the cell membrane. It catalyses the reaction Endohydrolysis of (1-&gt;4)-beta-D-glucosidic linkages in cellulose, lichenin and cereal beta-D-glucans.. This is Endoglucanase 21 (KOR3) from Arabidopsis thaliana (Mouse-ear cress).